A 400-amino-acid chain; its full sequence is Putative F-box protein At1g30920 (400 aa).

The 46-residue stretch at 4–49 (EENTDSIPIDLILDILSRLPSKSIARCRCVSKLWESMIRQSYFTEL) folds into the F-box domain.

The polypeptide is Putative F-box protein At1g30920 (Arabidopsis thaliana (Mouse-ear cress)).